We begin with the raw amino-acid sequence, 78 residues long: uncharacterized protein (78 aa).

This is an uncharacterized protein from Plasmodium falciparum (isolate fcm17 / Senegal).